The sequence spans 431 residues: MQLKRKNSVFIDPRIQEVAGPCEPSDNGNNEEEDKIISIRATASSASITKESVPEAPPTHFIPVVVTVEPDAWEKFRDIIQVNRNIVIVKVGRWLMSSFMPGDQISLVNGTAIWNSDDLENQVRGPKKETKTEVTVIRVWNLKCLTDIQLDKLLVPPEEQLHYFSVKVYSSKGTIGLKLCLDKKRVLVELIRAKTPVNSALLVGDQILGINDELLTAKSKRALRKQVAEVMKKSIKKQGFAEIIACRQVIARSSPAPSLEAELSEKFANYAVGVEKGTRIEKKDSSETNSLPLHSDALEIALRELACLKQWIVESSTEVPPCDKGPTLMIDPPTAPGSAEGCPPPLVKAKSTTNAIERSVYFPLSTTAAVAILVSTPKKRSIFRQQDRNSAINFAEQPDHEKITSDIPEEDDLKKCEPMSGIAAYIKKKFN.

This is an uncharacterized protein from Caenorhabditis elegans.